A 351-amino-acid chain; its full sequence is Glycerol-3-phosphate dehydrogenase 1-like protein (351 aa).

NAD(+) is bound at residue 12 to 17 (GSGNWG). Residue lysine 122 participates in substrate binding. NAD(+) is bound at residue alanine 155. The Proton acceptor role is filled by lysine 206. The NAD(+) site is built by arginine 271, lysine 298, and glutamine 300. 271–272 (RN) provides a ligand contact to substrate.

Belongs to the NAD-dependent glycerol-3-phosphate dehydrogenase family. In terms of assembly, interacts with SCN5A.

The protein localises to the cytoplasm. The enzyme catalyses sn-glycerol 3-phosphate + NAD(+) = dihydroxyacetone phosphate + NADH + H(+). Plays a role in regulating cardiac sodium current; decreased enzymatic activity with resulting increased levels of glycerol 3-phosphate activating the DPD1L-dependent SCN5A phosphorylation pathway, may ultimately lead to decreased sodium current; cardiac sodium current may also be reduced due to alterations of NAD(H) balance induced by DPD1L. The sequence is that of Glycerol-3-phosphate dehydrogenase 1-like protein (GPD1L) from Pongo abelii (Sumatran orangutan).